The chain runs to 269 residues: Shikimate dehydrogenase (NADP(+)) (269 aa).

Shikimate contacts are provided by residues 14-16 and Thr61; that span reads SLS. The active-site Proton acceptor is Lys65. Glu76 provides a ligand contact to NADP(+). Shikimate contacts are provided by Asn85 and Asp99. NADP(+) contacts are provided by residues 123 to 127, 146 to 151, and Ile209; these read GAGGA and NRTPER. Shikimate is bound at residue Tyr211. Residue Gly231 participates in NADP(+) binding.

The protein belongs to the shikimate dehydrogenase family. As to quaternary structure, homodimer.

It catalyses the reaction shikimate + NADP(+) = 3-dehydroshikimate + NADPH + H(+). It functions in the pathway metabolic intermediate biosynthesis; chorismate biosynthesis; chorismate from D-erythrose 4-phosphate and phosphoenolpyruvate: step 4/7. In terms of biological role, involved in the biosynthesis of the chorismate, which leads to the biosynthesis of aromatic amino acids. Catalyzes the reversible NADPH linked reduction of 3-dehydroshikimate (DHSA) to yield shikimate (SA). This Methanothrix thermoacetophila (strain DSM 6194 / JCM 14653 / NBRC 101360 / PT) (Methanosaeta thermophila) protein is Shikimate dehydrogenase (NADP(+)).